Consider the following 309-residue polypeptide: tRNA dimethylallyltransferase (309 aa).

Position 15-22 (15-22 (GPTASGKS)) interacts with ATP. 17–22 (TASGKS) lines the substrate pocket. Positions 40-43 (DSRQ) are interaction with substrate tRNA.

It belongs to the IPP transferase family. Monomer. Mg(2+) is required as a cofactor.

The enzyme catalyses adenosine(37) in tRNA + dimethylallyl diphosphate = N(6)-dimethylallyladenosine(37) in tRNA + diphosphate. Catalyzes the transfer of a dimethylallyl group onto the adenine at position 37 in tRNAs that read codons beginning with uridine, leading to the formation of N6-(dimethylallyl)adenosine (i(6)A). The polypeptide is tRNA dimethylallyltransferase (Chlorobium phaeovibrioides (strain DSM 265 / 1930) (Prosthecochloris vibrioformis (strain DSM 265))).